Consider the following 200-residue polypeptide: Holliday junction branch migration complex subunit RuvA (200 aa).

The tract at residues 1–63 is domain I; that stretch reads MYAYVKGKLT…EDAQLLYGFS (63 aa). The domain II stretch occupies residues 64-142; sequence SEEEKDMFLS…ITEEDSDSLL (79 aa). Positions 143–149 are flexible linker; it reads QVDATST. A domain III region spans residues 150–200; the sequence is EQDQFVQEAMLALEALGYSKRELAKVEKTLNKNKYDSVDEAVKAGLQLVVS.

Belongs to the RuvA family. Homotetramer. Forms an RuvA(8)-RuvB(12)-Holliday junction (HJ) complex. HJ DNA is sandwiched between 2 RuvA tetramers; dsDNA enters through RuvA and exits via RuvB. An RuvB hexamer assembles on each DNA strand where it exits the tetramer. Each RuvB hexamer is contacted by two RuvA subunits (via domain III) on 2 adjacent RuvB subunits; this complex drives branch migration. In the full resolvosome a probable DNA-RuvA(4)-RuvB(12)-RuvC(2) complex forms which resolves the HJ.

The protein localises to the cytoplasm. Its function is as follows. The RuvA-RuvB-RuvC complex processes Holliday junction (HJ) DNA during genetic recombination and DNA repair, while the RuvA-RuvB complex plays an important role in the rescue of blocked DNA replication forks via replication fork reversal (RFR). RuvA specifically binds to HJ cruciform DNA, conferring on it an open structure. The RuvB hexamer acts as an ATP-dependent pump, pulling dsDNA into and through the RuvAB complex. HJ branch migration allows RuvC to scan DNA until it finds its consensus sequence, where it cleaves and resolves the cruciform DNA. This Staphylococcus aureus (strain MRSA252) protein is Holliday junction branch migration complex subunit RuvA.